A 566-amino-acid chain; its full sequence is Sulfite reductase [NADPH] hemoprotein beta-component (566 aa).

Positions 430, 436, 475, and 479 each coordinate [4Fe-4S] cluster. Position 479 (Cys-479) interacts with siroheme.

Belongs to the nitrite and sulfite reductase 4Fe-4S domain family. Alpha(8)-beta(8). The alpha component is a flavoprotein, the beta component is a hemoprotein. Siroheme is required as a cofactor. [4Fe-4S] cluster serves as cofactor.

The enzyme catalyses hydrogen sulfide + 3 NADP(+) + 3 H2O = sulfite + 3 NADPH + 4 H(+). Its pathway is sulfur metabolism; hydrogen sulfide biosynthesis; hydrogen sulfide from sulfite (NADPH route): step 1/1. Functionally, component of the sulfite reductase complex that catalyzes the 6-electron reduction of sulfite to sulfide. This is one of several activities required for the biosynthesis of L-cysteine from sulfate. The sequence is that of Sulfite reductase [NADPH] hemoprotein beta-component from Baumannia cicadellinicola subsp. Homalodisca coagulata.